A 162-amino-acid polypeptide reads, in one-letter code: Nucleotide-binding protein SGR_2909 (162 aa).

This sequence belongs to the YajQ family.

In terms of biological role, nucleotide-binding protein. This Streptomyces griseus subsp. griseus (strain JCM 4626 / CBS 651.72 / NBRC 13350 / KCC S-0626 / ISP 5235) protein is Nucleotide-binding protein SGR_2909.